The sequence spans 240 residues: ATP-dependent dethiobiotin synthetase BioD 1 (240 aa).

13–18 (DVGKTV) lines the ATP pocket. Thr17 serves as a coordination point for Mg(2+). Lys38 is an active-site residue. Ser42 contacts substrate. Residues Asp55, 116–119 (EGAG), 176–177 (NE), 205–207 (PYL), and Glu212 contribute to the ATP site. 2 residues coordinate Mg(2+): Asp55 and Glu116.

It belongs to the dethiobiotin synthetase family. Homodimer. Requires Mg(2+) as cofactor.

It localises to the cytoplasm. It carries out the reaction (7R,8S)-7,8-diammoniononanoate + CO2 + ATP = (4R,5S)-dethiobiotin + ADP + phosphate + 3 H(+). The protein operates within cofactor biosynthesis; biotin biosynthesis; biotin from 7,8-diaminononanoate: step 1/2. In terms of biological role, catalyzes a mechanistically unusual reaction, the ATP-dependent insertion of CO2 between the N7 and N8 nitrogen atoms of 7,8-diaminopelargonic acid (DAPA, also called 7,8-diammoniononanoate) to form a ureido ring. This chain is ATP-dependent dethiobiotin synthetase BioD 1, found in Yersinia pestis.